Here is a 94-residue protein sequence, read N- to C-terminus: Small ribosomal subunit protein bS6 (94 aa).

It belongs to the bacterial ribosomal protein bS6 family.

Binds together with bS18 to 16S ribosomal RNA. The chain is Small ribosomal subunit protein bS6 from Clostridium botulinum (strain Loch Maree / Type A3).